Consider the following 469-residue polypeptide: Tetratricopeptide repeat protein 38 (469 aa).

Position 2 is an N-acetylalanine (Ala-2). Ser-5 carries the phosphoserine modification. TPR repeat units follow at residues 108-141 (REQLHVSAVETFAKGNFPKACELWEQILQDHPTD), 180-213 (SYVKGIYSFGLMETNFYDQAEKLAKEALSINPTD), and 252-285 (CHNYWHWALYLIEKGEYEAALTIYDTHILPSLQA).

This sequence belongs to the TTC38 family.

The protein is Tetratricopeptide repeat protein 38 (TTC38) of Pongo abelii (Sumatran orangutan).